We begin with the raw amino-acid sequence, 813 residues long: Tax1-binding protein 1 homolog (813 aa).

Phosphoserine occurs at positions 124, 138, and 225. A coiled-coil region spans residues 144 to 596; that stretch reads TTKAGLLELK…SYSLQLAEKD (453 aa). Residues 320–420 form an oligomerization region; sequence EEIGKLQSCL…ELQLHAVKTD (101 aa). Serine 618 carries the phosphoserine; by IKKA modification. Serine 631 carries the phosphoserine modification. The interval 667–732 is disordered; that stretch reads AHETRDGADG…NVPIPPDPAN (66 aa). Serine 692 bears the Phosphoserine; by IKKA mark. 2 consecutive UBZ1-type zinc fingers follow at residues 751-777 and 778-804; these read HKKC…VESH and WKVC…VQTH. 8 residues coordinate Zn(2+): cysteine 754, cysteine 757, histidine 773, histidine 777, cysteine 781, cysteine 784, histidine 800, and histidine 804.

In terms of assembly, homooligomer. Interacts with TNFAIP3. Interacts with STARD13. Interacts with MYO6. Interacts with TOM1; the interaction is indirect and is mediated by MYO6, which acts as a bridge between TOM1 and TAX1BP1. Interacts with MAVS; this interaction induces MAVS polyubiquitination. Interacts with TNIP1. Interacts with TRAF6; this interaction mediates deubiquitination of TRAF6 and inhibition of NF-kappa-B activation. Interacts with RIPK1; this interaction negatively regulates RIPK1 ubiquitination. Interacts with NBR1. Interacts with TBK1. Interacts with RB1CC1. Interacts with SQSTM1. Interacts with AZI2. Interacts with TICAM1 and TRIM32; these interactions target TICAM1 to TAX1BP1-mediated selective autophagic degradation. Phosphorylated in the C-terminal region by CHUK/IKKA leading to NF-kappa-B signaling down-regulation.

It localises to the cytoplasm. The protein localises to the mitochondrion. The protein resides in the preautophagosomal structure. It is found in the cytoplasmic vesicle. Its subcellular location is the autophagosome. Its function is as follows. Ubiquitin-binding adapter that participates in inflammatory, antiviral and innate immune processes as well as selective autophagy regulation. Plays a key role in the negative regulation of NF-kappa-B and IRF3 signalings by acting as an adapter for the ubiquitin-editing enzyme A20/TNFAIP3 to bind and inactivate its substrates. Disrupts the interactions between the E3 ubiquitin ligase TRAF3 and TBK1/IKBKE to attenuate 'Lys63'-linked polyubiquitination of TBK1 and thereby IFN-beta production. Also recruits A20/TNFAIP3 to ubiquitinated signaling proteins TRAF6 and RIPK1, leading to their deubiquitination and disruption of IL-1 and TNF-induced NF-kappa-B signaling pathways. Inhibits virus-induced apoptosis by inducing the 'Lys-48'-linked polyubiquitination and degradation of MAVS via recruitment of the E3 ligase ITCH, thereby attenuating MAVS-mediated apoptosis signaling. As a macroautophagy/autophagy receptor, facilitates the xenophagic clearance of pathogenic bacteria such as Salmonella typhimurium and Mycobacterium tuberculosis. Upon NBR1 recruitment to the SQSTM1-ubiquitin condensates, acts as the major recruiter of RB1CC1 to these ubiquitin condensates to promote their autophagic degradation. Mediates the autophagic degradation of other substrates including TICAM1. The chain is Tax1-binding protein 1 homolog (Tax1bp1) from Rattus norvegicus (Rat).